The chain runs to 710 residues: Polyribonucleotide nucleotidyltransferase (710 aa).

Mg(2+) is bound by residues Asp489 and Asp495. One can recognise a KH domain in the interval 556–615; that stretch reads PKIDTIKIDVDKIKVVIGKGGETIDKIIAETGVKIDIDDEGNVSIYSSDQAAIDRTKEII. The S1 motif domain occupies 625 to 693; the sequence is GEVYHAKVIR…EKGRVDASMK (69 aa). The disordered stretch occupies residues 691-710; sequence SMKALIPRPPKPEKKEEKHD. The segment covering 700–710 has biased composition (basic and acidic residues); the sequence is PKPEKKEEKHD.

It belongs to the polyribonucleotide nucleotidyltransferase family. The cofactor is Mg(2+).

It is found in the cytoplasm. It carries out the reaction RNA(n+1) + phosphate = RNA(n) + a ribonucleoside 5'-diphosphate. Involved in mRNA degradation. Catalyzes the phosphorolysis of single-stranded polyribonucleotides processively in the 3'- to 5'-direction. The polypeptide is Polyribonucleotide nucleotidyltransferase (Streptococcus pyogenes serotype M4 (strain MGAS10750)).